The following is a 166-amino-acid chain: Regulator of ribonuclease activity A (166 aa).

The protein belongs to the RraA family. Homotrimer. Binds to both RNA-binding sites in the C-terminal region of Rne and to RhlB.

It is found in the cytoplasm. Globally modulates RNA abundance by binding to RNase E (Rne) and regulating its endonucleolytic activity. Can modulate Rne action in a substrate-dependent manner by altering the composition of the degradosome. Modulates RNA-binding and helicase activities of the degradosome. This is Regulator of ribonuclease activity A from Histophilus somni (strain 2336) (Haemophilus somnus).